The sequence spans 219 residues: Aspartic protease inhibitor 10 (219 aa).

The signal sequence occupies residues 1–23 (MMKCLFLLCLCLVPIVVFSSTFT). Positions 24-32 (SQNLIDLPS) are excised as a propeptide. The Vacuolar targeting signal signature appears at 26–31 (NLIDLP). A glycan (N-linked (GlcNAc...) asparagine) is linked at N51. Disulfide bonds link C80–C125 and C173–C184.

This sequence belongs to the protease inhibitor I3 (leguminous Kunitz-type inhibitor) family. In terms of tissue distribution, in tubers and green buds of untreated plants. After abscisic acid treatment or mechanical wounding is mostly accumulated in leaves, to a lesser extent in stems, but not in roots.

In terms of biological role, inhibitor of cathepsin D (aspartic protease) and trypsin (serine protease). Protects the plant by inhibiting proteases of invading organisms. In Solanum tuberosum (Potato), this protein is Aspartic protease inhibitor 10 (CDI).